We begin with the raw amino-acid sequence, 214 residues long: Eukaryotic translation initiation factor 4E-1B (214 aa).

MRNA-binding positions include 53-54 (WQ), 99-100 (WE), 154-159 (RAKGDK), and 202-204 (TKS).

As to expression, ovary, muscle and testis.

It localises to the cytoplasm. The protein resides in the nucleus. In terms of biological role, does not appear to be a mRNA-cap-binding protein. The polypeptide is Eukaryotic translation initiation factor 4E-1B (Danio rerio (Zebrafish)).